Consider the following 96-residue polypeptide: Co-chaperonin GroES (96 aa).

The protein belongs to the GroES chaperonin family. As to quaternary structure, heptamer of 7 subunits arranged in a ring. Interacts with the chaperonin GroEL.

It is found in the cytoplasm. Its function is as follows. Together with the chaperonin GroEL, plays an essential role in assisting protein folding. The GroEL-GroES system forms a nano-cage that allows encapsulation of the non-native substrate proteins and provides a physical environment optimized to promote and accelerate protein folding. GroES binds to the apical surface of the GroEL ring, thereby capping the opening of the GroEL channel. The protein is Co-chaperonin GroES of Shewanella sediminis (strain HAW-EB3).